A 367-amino-acid chain; its full sequence is D-alanine--D-alanine ligase (367 aa).

The 202-residue stretch at 139-340 folds into the ATP-grasp domain; sequence KLILKEKNIP…FSQVIDNMIS (202 aa). ATP is bound at residue 169–224; the sequence is KEVLEYPMIVKPARLGSSIGVKKVNDKCELEEAIETAFSFDDKVIVEKWIDSRELN. Residues aspartate 298, glutamate 311, and asparagine 313 each contribute to the Mg(2+) site.

The protein belongs to the D-alanine--D-alanine ligase family. Requires Mg(2+) as cofactor. Mn(2+) serves as cofactor.

It is found in the cytoplasm. It catalyses the reaction 2 D-alanine + ATP = D-alanyl-D-alanine + ADP + phosphate + H(+). The protein operates within cell wall biogenesis; peptidoglycan biosynthesis. Its function is as follows. Cell wall formation. In Thermosipho africanus (strain TCF52B), this protein is D-alanine--D-alanine ligase.